A 384-amino-acid polypeptide reads, in one-letter code: Na(+)/H(+) antiporter NhaA (384 aa).

A run of 11 helical transmembrane segments spans residues 7-27 (FYNLETIGGILLFIAAVLAII), 58-78 (LLLWINDGLMAIYFLLIGLEI), 94-114 (LVPALTALAGLLFPALIFIFF), 124-144 (GWAIPTATDIAFTLGIVSLLG), 153-173 (ILLTAIAIFDDIAAIVIIALF), 179-199 (SLLSLSLALVFTLILIGLNYF), 204-224 (ISVFMLFGVALWIAVLKSGVH), 256-276 (VVFLILPLFAFANAGVSFVGL), 285-305 (VVLGIGLGLFLGKQLGIFLSL), 325-345 (VYGIALICGVGFTMSLFIGSL), and 357-377 (MVKIGVVFGSFIAGLTGFLVL).

This sequence belongs to the NhaA Na(+)/H(+) (TC 2.A.33) antiporter family.

The protein resides in the cell inner membrane. It catalyses the reaction Na(+)(in) + 2 H(+)(out) = Na(+)(out) + 2 H(+)(in). In terms of biological role, na(+)/H(+) antiporter that extrudes sodium in exchange for external protons. This Legionella pneumophila (strain Corby) protein is Na(+)/H(+) antiporter NhaA.